The sequence spans 317 residues: Tricarboxylate transport protein B, mitochondrial (317 aa).

Positions methionine 1–alanine 20 are cleaved as a propeptide — removed in mature form. Solcar repeat units follow at residues threonine 29–glutamine 117, threonine 128–tryptophan 214, and isoleucine 224–valine 309. 4 consecutive transmembrane segments (helical) span residues isoleucine 35–valine 55, glycine 130–glutamate 150, serine 223–glycine 243, and methionine 294–tryptophan 314.

The protein belongs to the mitochondrial carrier (TC 2.A.29) family. Possesses a short cleavable presequence, which, however, is found to be dispensable both for targeting to mitochondria and insertion into the inner membrane. However, the presequence is required to keep SLC25A1 in a soluble state and thus in an import-competent state. Mature SLC25A1 lacking the presequence is prone to aggregation.

The protein localises to the mitochondrion inner membrane. It carries out the reaction (S)-malate(in) + citrate(out) = (S)-malate(out) + citrate(in). It catalyses the reaction D-threo-isocitrate(in) + citrate(out) = D-threo-isocitrate(out) + citrate(in). The catalysed reaction is citrate(out) + succinate(in) = citrate(in) + succinate(out). The enzyme catalyses cis-aconitate(in) + citrate(out) = cis-aconitate(out) + citrate(in). It carries out the reaction trans-aconitate(in) + citrate(out) = trans-aconitate(out) + citrate(in). It catalyses the reaction phosphoenolpyruvate(in) + citrate(out) = phosphoenolpyruvate(out) + citrate(in). The catalysed reaction is maleate(in) + citrate(out) = maleate(out) + citrate(in). Its function is as follows. Mitochondrial electroneutral antiporter that exports citrate from the mitochondria into the cytosol in exchange for malate. Also able to mediate the exchange of citrate for isocitrate, phosphoenolpyruvate, cis-aconitate and to a lesser extent trans-aconitate, maleate and succinate. In the cytoplasm, citrate plays important roles in fatty acid and sterol synthesis, regulation of glycolysis, protein acetylation, and other physiopathological processes. This Danio rerio (Zebrafish) protein is Tricarboxylate transport protein B, mitochondrial.